The primary structure comprises 247 residues: ATP synthase subunit a, plastid (247 aa).

5 consecutive transmembrane segments (helical) span residues 33–53, 95–115, 134–154, 199–219, and 220–240; these read FLVHGQVLITSWVVIAILLGS, VPFIGTMFLFIFVSNWSGALL, INTTVALALLTSAAYFYAGIL, LVVVVLVSLVPSVVPIPVMLL, and GLFTSGIQALIFATLAAAYIG.

The protein belongs to the ATPase A chain family. As to quaternary structure, F-type ATPases have 2 components, CF(1) - the catalytic core - and CF(0) - the membrane proton channel. CF(1) has five subunits: alpha(3), beta(3), gamma(1), delta(1), epsilon(1). CF(0) has four main subunits: a, b, b' and c.

It localises to the plastid membrane. In terms of biological role, key component of the proton channel; it plays a direct role in the translocation of protons across the membrane. This chain is ATP synthase subunit a, plastid, found in Cuscuta exaltata (Tall dodder).